We begin with the raw amino-acid sequence, 342 residues long: AM-toxin biosynthesis protein 12 (342 aa).

The N-terminal stretch at 1–20 (MSLLITSLAWGALLDPEVSS) is a signal peptide.

It functions in the pathway mycotoxin biosynthesis. In terms of biological role, part of the gene clusters that mediate the biosynthesis of AM-toxins, host-selective toxins (HSTs) causing Alternaria blotch on apple, a worldwide distributed disease. AM-toxins are cyclic depsipeptides containing the 3 residues 2-hydroxy-isovaleric acid (2-HIV), dehydroalanine, L-alanine which are common for all 3 AM-toxins I to III. The fourth precursor is L-alpha-amino-methoxyphenyl-valeric acid (L-Amv) for AM-toxin I, L-alpha-amino-phenyl-valeric acid (L-Apv) for AM-toxin II, and L-alpha-amino-hydroxyphenyl-valeric acid (L-Ahv) for AM-toxin III. AM-toxins have two target sites for affecting susceptible apple cells; they cause invagination of the plasma membrane and electrolyte loss and chloroplast disorganization. The non-ribosomal peptide synthetase AMT1 contains 4 catalytic modules and is responsible for activation of each residue in AM-toxin. The aldo-keto reductase AMT2 catalyzes the conversion of 2-keto-isovaleric acid (2-KIV) to 2-hydroxy-isovaleric acid (2-HIV), one of the precursor residues incorporated by AMT1 during AM-toxin biosynthesis, by reduction of its ketone to an alcohol. The cytochrome P450 monooxygenase AMT3 and the thioesterase AMT4 are also important for AM-toxin production, but their exact function within the AM-toxin biosynthesis are not known yet. Up to 21 proteins (including AMT1 to AMT4) are predicted to be involved in AM-toxin biosynthesis since their expression ishighly up-regulated in AM-toxin-producing cultures. The chain is AM-toxin biosynthesis protein 12 from Alternaria alternata (Alternaria rot fungus).